The following is an 80-amino-acid chain: Defensin-like protein 276 (80 aa).

The N-terminal stretch at 1–24 (MSGQKYQLVSLLLIICLLFSQSTA) is a signal peptide. Cystine bridges form between C27-C67, C33-C55, C39-C65, and C43-C66.

Belongs to the DEFL family.

Its subcellular location is the secreted. This Arabidopsis thaliana (Mouse-ear cress) protein is Defensin-like protein 276.